We begin with the raw amino-acid sequence, 696 residues long: Verrucotoxin subunit beta (696 aa).

The region spanning 506–696 is the B30.2/SPRY domain; sequence HMPGVETIKD…GCTTESQWSN (191 aa).

The protein belongs to the SNTX/VTX toxin family. Tetramer composed of 2 alpha and 2 beta subunits. Glycosylated. In terms of tissue distribution, expressed by the venom gland.

Its subcellular location is the secreted. Its function is as follows. This lethal (towards mice) toxin induces hemolytic, cytolytic and hypotensive activities. Inhibits calcium channels and may activate ATP-sensitive potassium channels in frog atrial heart muscle. In guinea-pig ventricular myocytes, it modulates calcium channel activity through the beta-adrenoceptor-cAMP-PKA pathway (ADRB). This chain is Verrucotoxin subunit beta, found in Synanceia verrucosa (Reef stonefish).